A 280-amino-acid chain; its full sequence is Acyl-[acyl-carrier-protein]--UDP-N-acetylglucosamine O-acyltransferase (280 aa).

It belongs to the transferase hexapeptide repeat family. LpxA subfamily. Homotrimer.

The protein localises to the cytoplasm. The catalysed reaction is a (3R)-hydroxyacyl-[ACP] + UDP-N-acetyl-alpha-D-glucosamine = a UDP-3-O-[(3R)-3-hydroxyacyl]-N-acetyl-alpha-D-glucosamine + holo-[ACP]. It functions in the pathway glycolipid biosynthesis; lipid IV(A) biosynthesis; lipid IV(A) from (3R)-3-hydroxytetradecanoyl-[acyl-carrier-protein] and UDP-N-acetyl-alpha-D-glucosamine: step 1/6. Functionally, involved in the biosynthesis of lipid A, a phosphorylated glycolipid that anchors the lipopolysaccharide to the outer membrane of the cell. This is Acyl-[acyl-carrier-protein]--UDP-N-acetylglucosamine O-acyltransferase from Chlamydia muridarum (strain MoPn / Nigg).